The primary structure comprises 379 residues: UDP-4-amino-4-deoxy-L-arabinose--oxoglutarate aminotransferase (379 aa).

Lysine 182 is modified (N6-(pyridoxal phosphate)lysine).

It belongs to the DegT/DnrJ/EryC1 family. ArnB subfamily. As to quaternary structure, homodimer. The cofactor is pyridoxal 5'-phosphate.

It catalyses the reaction UDP-4-amino-4-deoxy-beta-L-arabinose + 2-oxoglutarate = UDP-beta-L-threo-pentopyranos-4-ulose + L-glutamate. It participates in nucleotide-sugar biosynthesis; UDP-4-deoxy-4-formamido-beta-L-arabinose biosynthesis; UDP-4-deoxy-4-formamido-beta-L-arabinose from UDP-alpha-D-glucuronate: step 2/3. Its pathway is bacterial outer membrane biogenesis; lipopolysaccharide biosynthesis. Its function is as follows. Catalyzes the conversion of UDP-4-keto-arabinose (UDP-Ara4O) to UDP-4-amino-4-deoxy-L-arabinose (UDP-L-Ara4N). The modified arabinose is attached to lipid A and is required for resistance to polymyxin and cationic antimicrobial peptides. This Klebsiella pneumoniae subsp. pneumoniae (strain ATCC 700721 / MGH 78578) protein is UDP-4-amino-4-deoxy-L-arabinose--oxoglutarate aminotransferase.